Here is a 340-residue protein sequence, read N- to C-terminus: Annexin A2-A (340 aa).

The tract at residues 2-25 (ALIHEILGKLSLEGNQSCARQSAL) is P10 binding site. Annexin repeat units follow at residues 34–105 (FDAE…GLIK), 106–177 (TRPQ…ALAK), 190–262 (EKID…NLVQ), and 266–337 (NKPL…NLCG).

It belongs to the annexin family. As to quaternary structure, tetramer of 2 light chains (p10 proteins) and 2 heavy chains (p36 proteins).

It localises to the secreted. It is found in the extracellular space. The protein resides in the extracellular matrix. The protein localises to the basement membrane. In terms of biological role, calcium-regulated membrane-binding protein whose affinity for calcium is greatly enhanced by anionic phospholipids. It binds two calcium ions with high affinity. The sequence is that of Annexin A2-A (anxa2-a) from Xenopus laevis (African clawed frog).